The chain runs to 181 residues: Alkyl hydroperoxide reductase AhpD (181 aa).

Cysteine 131 serves as the catalytic Proton donor. A disulfide bridge links cysteine 131 with cysteine 134. The active-site Cysteine sulfenic acid (-SOH) intermediate is the cysteine 134.

Belongs to the AhpD family.

The catalysed reaction is N(6)-[(R)-dihydrolipoyl]-L-lysyl-[lipoyl-carrier protein] + a hydroperoxide = N(6)-[(R)-lipoyl]-L-lysyl-[lipoyl-carrier protein] + an alcohol + H2O. Its function is as follows. Antioxidant protein with alkyl hydroperoxidase activity. Required for the reduction of the AhpC active site cysteine residues and for the regeneration of the AhpC enzyme activity. The chain is Alkyl hydroperoxide reductase AhpD from Bradyrhizobium sp. (strain BTAi1 / ATCC BAA-1182).